A 340-amino-acid chain; its full sequence is MHISTIPVSDIAKPNAPAAGAWQADDVLALYELPFMDLLYRAQQVHRQHFDASAIQLSSLLSIKTGGCPEDCAYCPQSAHYDTGLAADKLMPLEDVLQAARAAQAGGAQRFCMGAAWRSPKPHHLDEVAEMIRAVKALGLETCVTLGMLRDGQAEQLKEAGLDYYNHNLDTSPEFYGSIISTRTYQDRLDTLARVRDAGLNVCCGGIVGMGESRRERAGLIAQLASLDPYPESVPINNLVQVEGTPLAGTEALDPFEFVRTIAVARIVMPLARVRLSAGRETMSDTLQALCFLAGANSLFCGDVLLTTGNPQVEADQRLLERLGMHAEGALPALPQATPA.

The region spanning 53–280 is the Radical SAM core domain; that stretch reads SAIQLSSLLS…LARVRLSAGR (228 aa). [4Fe-4S] cluster-binding residues include Cys68, Cys72, and Cys75. [2Fe-2S] cluster-binding residues include Cys112, Cys143, Cys203, and Arg275.

It belongs to the radical SAM superfamily. Biotin synthase family. In terms of assembly, homodimer. [4Fe-4S] cluster is required as a cofactor. Requires [2Fe-2S] cluster as cofactor.

It catalyses the reaction (4R,5S)-dethiobiotin + (sulfur carrier)-SH + 2 reduced [2Fe-2S]-[ferredoxin] + 2 S-adenosyl-L-methionine = (sulfur carrier)-H + biotin + 2 5'-deoxyadenosine + 2 L-methionine + 2 oxidized [2Fe-2S]-[ferredoxin]. It participates in cofactor biosynthesis; biotin biosynthesis; biotin from 7,8-diaminononanoate: step 2/2. Its function is as follows. Catalyzes the conversion of dethiobiotin (DTB) to biotin by the insertion of a sulfur atom into dethiobiotin via a radical-based mechanism. The chain is Biotin synthase from Bordetella petrii (strain ATCC BAA-461 / DSM 12804 / CCUG 43448).